A 409-amino-acid polypeptide reads, in one-letter code: Microfibrillar-associated protein 3-like (409 aa).

The first 28 residues, 1 to 28, serve as a signal peptide directing secretion; sequence MGLQKSHLTVCLPPSVPFLILVSTLATA. At 29–148 the chain is on the extracellular side; the sequence is KSVTNSTLNG…TLRVIFTSGD (120 aa). N-linked (GlcNAc...) asparagine glycans are attached at residues N33, N37, N67, N111, and N135. The Ig-like C2-type domain occupies 47–141; sequence PVIIARTDHI…GTINNTVTLR (95 aa). The cysteines at positions 68 and 125 are disulfide-linked. A helical membrane pass occupies residues 149–169; the sequence is MGVYYMVVCLVAFTIVMILNI. The Cytoplasmic portion of the chain corresponds to 170–409; it reads TRLCMMSSHL…NTCIIYESHV (240 aa). Position 287 is a phosphotyrosine (Y287). S298, S303, S306, and S307 each carry phosphoserine. Residues 319–395 are disordered; sequence VSVHPQSKRD…AHLETTEPAV (77 aa). Basic and acidic residues predominate over residues 325 to 340; the sequence is SKRDHVDDQEGGHFEV. Residues 356 to 373 show a composition bias toward low complexity; the sequence is TAEPSTDITTTELTSEET.

Its subcellular location is the cell membrane. It is found in the nucleus. The protein localises to the cytoplasm. Its function is as follows. May participate in the nuclear signaling of EGFR and MAPK1/ERK2. The protein is Microfibrillar-associated protein 3-like (Mfap3l) of Mus musculus (Mouse).